A 334-amino-acid chain; its full sequence is NAD-dependent protein deacylase sirtuin-6 (334 aa).

Residue serine 2 is modified to N-acetylserine. Serine 10 bears the Phosphoserine mark. Residues 27-272 form the Deacetylase sirtuin-type domain; that stretch reads PEELERKVWE…CRLMKHLGLE (246 aa). The residue at position 33 (lysine 33) is an N6-acetyllysine. 7 residues coordinate NAD(+): alanine 53, threonine 57, phenylalanine 64, arginine 65, tryptophan 71, glutamine 113, and histidine 133. The active-site Proton acceptor is the histidine 133. Zn(2+) is bound by residues cysteine 141, cysteine 144, and cysteine 166. Residue lysine 170 forms a Glycyl lysine isopeptide (Lys-Gly) (interchain with G-Cter in ubiquitin) linkage. Residue cysteine 177 participates in Zn(2+) binding. NAD(+) contacts are provided by glycine 214, serine 216, asparagine 240, glutamine 242, and valine 258. The segment at 312 to 334 is disordered; sequence KSKPNSPILHRPPKRVKTEAAPS.

It belongs to the sirtuin family. Class IV subfamily. Homodimer; binds to nucleosomes and DNA ends as a homodimer. Interacts with RELA; interferes with RELA binding to target DNA. Interacts with SMARCA5; promoting recruitment of SMARCA5/SNF2H to double-strand breaks (DSBs) sites. Interacts with the mTORC2 complex; preventing the ability of SIRT6 to deacetylate FOXO1. Interacts with the CLOCK-BMAL1 complex; recruited by the CLOCK-BMAL1 complex to regulate expression of clock-controlled genes. Interacts with CSNK2A2; preventing CSNK2A2 localization to the nucleus. The cofactor is Zn(2+). Acetylated at Lys-33. Deacetylation at Lys-33 by SIRT1 promotes homomultimerization and binding to double-strand breaks (DSBs) sites. Post-translationally, phosphorylation at Ser-10 by MAPK8/JNK1 in response to oxidative stress stimulates the mono-ADP-ribosyltransferase activity on PARP1, leading to PARP1 recruitment to double-strand breaks (DSBs). In terms of processing, monoubiquitinated at Lys-170 by STUB1/CHIP, preventing its degradation by the proteasome. Sumoylated, leading to specifically decrease ability to deacetylate histone H3 at 'Lys-56' (H3K56ac). Highest levels are found in muscle, thymus, spleen, brain and heart (at protein level).

The protein resides in the nucleus. The protein localises to the chromosome. It localises to the telomere. It is found in the endoplasmic reticulum. The catalysed reaction is N(6)-acetyl-L-lysyl-[protein] + NAD(+) + H2O = 2''-O-acetyl-ADP-D-ribose + nicotinamide + L-lysyl-[protein]. The enzyme catalyses N(6)-tetradecanoyl-L-lysyl-[protein] + NAD(+) + H2O = 2''-O-tetradecanoyl-ADP-D-ribose + nicotinamide + L-lysyl-[protein]. It catalyses the reaction N(6)-hexadecanoyl-L-lysyl-[protein] + NAD(+) + H2O = 2''-O-hexadecanoyl-ADP-D-ribose + nicotinamide + L-lysyl-[protein]. It carries out the reaction L-lysyl-[protein] + NAD(+) = N(6)-(ADP-D-ribosyl)-L-lysyl-[protein] + nicotinamide + H(+). The catalysed reaction is L-arginyl-[protein] + NAD(+) = N(omega)-(ADP-D-ribosyl)-L-arginyl-[protein] + nicotinamide + H(+). With respect to regulation, compared to the defatty-acylase activity, the protein deacetylase activity is weak in vitro, and requires activation. The histone deacetylase activity is strongly activated upon binding to nucleosomes and chromatin in vivo. Two molecules of SIRT6 associate with the acidic patch of one nucleosome, while the C-terminal disordered region of SIRT6 associates with nucleosomal DNA, leading to efficient histone deacetylation. The protein-lysine deacetylase activity is also activated by long-chain free fatty-acids. Its function is as follows. NAD-dependent protein deacetylase, deacylase and mono-ADP-ribosyltransferase that plays an essential role in DNA damage repair, telomere maintenance, metabolic homeostasis, inflammation, tumorigenesis and aging. Displays protein-lysine deacetylase or defatty-acylase (demyristoylase and depalmitoylase) activity, depending on the context. Acts as a key histone deacetylase by catalyzing deacetylation of histone H3 at 'Lys-9', 'Lys-18' and 'Lys-56' (H3K9ac, H3K18ac and H3K56ac, respectively), suppressing target gene expression of several transcription factors, including NF-kappa-B. Acts as an inhibitor of transcription elongation by mediating deacetylation of H3K9ac and H3K56ac, preventing release of NELFE from chromatin and causing transcriptional pausing. Involved in DNA repair by promoting double-strand break (DSB) repair: acts as a DSB sensor by recognizing and binding DSB sites, leading to (1) recruitment of DNA repair proteins, such as SMARCA5/SNF2H, and (2) deacetylation of histone H3K9ac and H3K56ac. SIRT6 participation to DSB repair is probably involved in extension of life span. Also promotes DNA repair by deacetylating non-histone proteins, such as DDB2 and p53/TP53. Specifically deacetylates H3K18ac at pericentric heterochromatin, thereby maintaining pericentric heterochromatin silencing at centromeres and protecting against genomic instability and cellular senescence. Involved in telomere maintenance by catalyzing deacetylation of histone H3 in telomeric chromatin, regulating telomere position effect and telomere movement in response to DNA damage. Required for embryonic stem cell differentiation by mediating histone deacetylation of H3K9ac. Plays a major role in metabolism by regulating processes such as glycolysis, gluconeogenesis, insulin secretion and lipid metabolism. Inhibits glycolysis via histone deacetylase activity and by acting as a corepressor of the transcription factor HIF1A, thereby controlling the expression of multiple glycolytic genes. Has tumor suppressor activity by repressing glycolysis, thereby inhibiting the Warburg effect. Also regulates glycolysis and tumorigenesis by mediating deacetylation and nuclear export of non-histone proteins, such as isoform M2 of PKM (PKM2). Acts as a negative regulator of gluconeogenesis by mediating deacetylation of non-histone proteins, such as FOXO1 and KAT2A/GCN5. Promotes beta-oxidation of fatty acids during fasting by catalyzing deacetylation of NCOA2, inducing coactivation of PPARA. Acts as a regulator of lipid catabolism in brown adipocytes, both by catalyzing deacetylation of histones and non-histone proteins, such as FOXO1. Also acts as a regulator of circadian rhythms, both by regulating expression of clock-controlled genes involved in lipid and carbohydrate metabolism, and by catalyzing deacetylation of PER2. The defatty-acylase activity is specifically involved in regulation of protein secretion. Has high activity toward long-chain fatty acyl groups and mediates protein-lysine demyristoylation and depalmitoylation of target proteins, such as RRAS2 and TNF, thereby regulating their secretion. Also acts as a mono-ADP-ribosyltransferase by mediating mono-ADP-ribosylation of PARP1, TRIM28/KAP1 or SMARCC2/BAF170. Mono-ADP-ribosyltransferase activity is involved in DNA repair, cellular senescence, repression of LINE-1 retrotransposon elements and regulation of transcription. This chain is NAD-dependent protein deacylase sirtuin-6, found in Mus musculus (Mouse).